Reading from the N-terminus, the 291-residue chain is Energy-coupling factor transporter ATP-binding protein EcfA2 (291 aa).

The ABC transporter domain maps to 3–246 (ITFKDVSYTY…PEWLTSKQLG (244 aa)). Residue 40 to 47 (GHTGSGKS) coordinates ATP.

It belongs to the ABC transporter superfamily. Energy-coupling factor EcfA family. Forms a stable energy-coupling factor (ECF) transporter complex composed of 2 membrane-embedded substrate-binding proteins (S component), 2 ATP-binding proteins (A component) and 2 transmembrane proteins (T component).

The protein resides in the cell membrane. In terms of biological role, ATP-binding (A) component of a common energy-coupling factor (ECF) ABC-transporter complex. Unlike classic ABC transporters this ECF transporter provides the energy necessary to transport a number of different substrates. This Latilactobacillus sakei subsp. sakei (strain 23K) (Lactobacillus sakei subsp. sakei) protein is Energy-coupling factor transporter ATP-binding protein EcfA2.